A 249-amino-acid chain; its full sequence is uncharacterized protein (249 aa).

An N-terminal signal peptide occupies residues methionine 1–alanine 36. The disordered stretch occupies residues alanine 227–glutamine 249.

This is an uncharacterized protein from Mycobacterium tuberculosis (strain CDC 1551 / Oshkosh).